We begin with the raw amino-acid sequence, 44 residues long: Protein non-structural 7b (44 aa).

A helical membrane pass occupies residues 9-29 (FYLCFLAFLLFLVLIMLIIFW).

It is found in the host membrane. The chain is Protein non-structural 7b from Homo sapiens (Human).